Consider the following 506-residue polypeptide: RNA-splicing ligase RtcB homolog (506 aa).

Mn(2+)-binding residues include Asp-120, Cys-123, His-228, His-260, and His-354. 227-231 (NHYAE) lines the GMP pocket. Residues 354–355 (HN), 403–406 (GGSM), Ser-410, 429–432 (HGAG), and Lys-505 each bind GMP. His-429 functions as the GMP-histidine intermediate in the catalytic mechanism.

This sequence belongs to the RtcB family. Catalytic component of the tRNA-splicing ligase complex. It depends on Mn(2+) as a cofactor.

The catalysed reaction is a 3'-end 3'-phospho-ribonucleotide-RNA + a 5'-end dephospho-ribonucleoside-RNA + GTP = a ribonucleotidyl-ribonucleotide-RNA + GMP + diphosphate. It carries out the reaction a 3'-end 2',3'-cyclophospho-ribonucleotide-RNA + a 5'-end dephospho-ribonucleoside-RNA + GTP + H2O = a ribonucleotidyl-ribonucleotide-RNA + GMP + diphosphate + H(+). Catalytic subunit of the tRNA-splicing ligase complex that acts by directly joining spliced tRNA halves to mature-sized tRNAs by incorporating the precursor-derived splice junction phosphate into the mature tRNA as a canonical 3',5'-phosphodiester. May act as an RNA ligase with broad substrate specificity, and may function toward other RNAs. In Aedes aegypti (Yellowfever mosquito), this protein is RNA-splicing ligase RtcB homolog.